The following is a 568-amino-acid chain: Vitamin H transporter 1 (568 aa).

The next 12 helical transmembrane spans lie at 85–105, 123–143, 158–178, 187–207, 222–242, 257–277, 345–365, 384–404, 411–431, 439–459, 470–490, and 508–528; these read IIPCLWILYFLSCCLRFTVSL, GYSAHYLALGLALFYVGYIIF, IWVSRIQLTIGVVGACHAVLG, YVALRFFLGVAESGLWPGLAY, IGWYYTAAQIAAAAVSLVSAG, WMFLIWGVVAIAQALSIPWWL, VWPFILMYFGIVGVGNGIFNY, LLNAPIWLADALGIVTVMPLY, FSFFTGSCLIIIAGLAVANYA, GGLLMIGFGLGPTVPICMAWC, VGVASSLALVTGLGNLGSVVT, and NDVCIALIGVSIIACGIEFLL. The segment at 547–568 is disordered; sequence VEDEQEMTDIKPALPSSQQADA.

It belongs to the major facilitator superfamily. Allantoate permease family.

Its subcellular location is the membrane. Involved in uptake of biotin and desthiobiotin with the concomitant entry of protons. This Schizosaccharomyces pombe (strain 972 / ATCC 24843) (Fission yeast) protein is Vitamin H transporter 1 (vht1).